Consider the following 193-residue polypeptide: Molybdenum cofactor guanylyltransferase (193 aa).

GTP is bound by residues 8 to 10, Lys21, Asp67, and Asp98; that span reads LAG. Mg(2+) is bound at residue Asp98.

Belongs to the MobA family. Monomer. Mg(2+) serves as cofactor.

The protein resides in the cytoplasm. It carries out the reaction Mo-molybdopterin + GTP + H(+) = Mo-molybdopterin guanine dinucleotide + diphosphate. Functionally, transfers a GMP moiety from GTP to Mo-molybdopterin (Mo-MPT) cofactor (Moco or molybdenum cofactor) to form Mo-molybdopterin guanine dinucleotide (Mo-MGD) cofactor. The sequence is that of Molybdenum cofactor guanylyltransferase from Cereibacter sphaeroides (strain ATCC 17023 / DSM 158 / JCM 6121 / CCUG 31486 / LMG 2827 / NBRC 12203 / NCIMB 8253 / ATH 2.4.1.) (Rhodobacter sphaeroides).